A 145-amino-acid polypeptide reads, in one-letter code: Basic phospholipase A2 beta-bungarotoxin A2 chain (145 aa).

The N-terminal stretch at Met-1–Ala-17 is a signal peptide. The propeptide occupies Ala-18–Leu-25. Cystine bridges form between Cys-52/Cys-144, Cys-54/Cys-70, Cys-69/Cys-125, Cys-76/Cys-118, Cys-86/Cys-111, and Cys-104/Cys-116. Residues Tyr-53, Gly-55, and Gly-57 each contribute to the Ca(2+) site. Residue His-73 is part of the active site. Asp-74 provides a ligand contact to Ca(2+). Asp-119 is a catalytic residue.

The protein belongs to the phospholipase A2 family. Group I subfamily. D49 sub-subfamily. In terms of assembly, heterodimer; disulfide-linked. The A chains have phospholipase A2 activity and the B chains show homology with the basic protease inhibitors. The A2 chain is found in beta-3 and beta-4 bungarotoxins. Requires Ca(2+) as cofactor. As to expression, expressed by the venom gland.

It is found in the secreted. The enzyme catalyses a 1,2-diacyl-sn-glycero-3-phosphocholine + H2O = a 1-acyl-sn-glycero-3-phosphocholine + a fatty acid + H(+). Its function is as follows. Snake venom phospholipase A2 (PLA2) that inhibits neuromuscular transmission by blocking acetylcholine release from the nerve termini. PLA2 catalyzes the calcium-dependent hydrolysis of the 2-acyl groups in 3-sn-phosphoglycerides. This chain is Basic phospholipase A2 beta-bungarotoxin A2 chain, found in Bungarus multicinctus (Many-banded krait).